The sequence spans 218 residues: Claudin-5 (218 aa).

Topologically, residues Met-1–Glu-7 are cytoplasmic. Residues Ile-8–Pro-28 traverse the membrane as a helical segment. Residues Met-29 to Arg-81 are Extracellular-facing. Residues Ala-82–Ala-102 traverse the membrane as a helical segment. Topologically, residues Gln-103–Gly-122 are cytoplasmic. Residues Val-123 to Val-143 traverse the membrane as a helical segment. Over Val-144–Glu-159 the chain is Extracellular. Residues Leu-160–Leu-180 traverse the membrane as a helical segment. The Cytoplasmic portion of the chain corresponds to Leu-181–Val-218. The interval Tyr-217–Val-218 is interactions with TJP1, TJP2 and TJP3.

The protein belongs to the claudin family. As to quaternary structure, directly interacts with TJP1/ZO-1, TJP2/ZO-2 and TJP3/ZO-3. Interacts with MPDZ.

Its subcellular location is the cell junction. The protein resides in the tight junction. The protein localises to the cell membrane. In terms of biological role, plays a major role in tight junction-specific obliteration of the intercellular space. The protein is Claudin-5 (CLDN5) of Homo sapiens (Human).